The primary structure comprises 510 residues: Propionyl-CoA carboxylase beta chain (510 aa).

The CoA carboxyltransferase N-terminal domain occupies 1 to 257 (MKDILQELEN…SNRTPAPVRP (257 aa)). Residues 1–504 (MKDILQELEN…NKKLANPWKK (504 aa)) are carboxyltransferase. Residues 264–504 (RIEDSLDTLI…NKKLANPWKK (241 aa)) form the CoA carboxyltransferase C-terminal domain.

The protein belongs to the AccD/PCCB family. Probably a dodecamer composed of six biotin-containing alpha subunits and six beta subunits.

It carries out the reaction propanoyl-CoA + hydrogencarbonate + ATP = (S)-methylmalonyl-CoA + ADP + phosphate + H(+). The protein operates within metabolic intermediate metabolism; propanoyl-CoA degradation; succinyl-CoA from propanoyl-CoA: step 1/3. The sequence is that of Propionyl-CoA carboxylase beta chain from Cereibacter sphaeroides (strain ATCC 17023 / DSM 158 / JCM 6121 / CCUG 31486 / LMG 2827 / NBRC 12203 / NCIMB 8253 / ATH 2.4.1.) (Rhodobacter sphaeroides).